Consider the following 404-residue polypeptide: MSHAIDELQAIIADLKTELETEPKSSVGVASNSRLARDRIDRMSAEVVDSNPYSRLMALQRMNIVKDYERIRDKAVAIVGVGGVGSVTADMLTRCGIGKLILFDYDKVELDNMNRLFFTPDQAGLSKVAAAAATLSFINPDVEIETHNYNITTVENFDRFLDTISQGGRIAGQPVDLVLSCVDNFEARMAINAACNERNLNWFESGVSENAVSGHIQFIRPGDTACFACAPPLVVAENIDEKTLKREGVCAASLPTTMGITAGFLVQNALKYLLNFGEVSDYLGYNALSDFFPKMTLKPNPQCDDRNCIVRQKEFQARPKPVVIEEKAVSEEPLHATNEWGIELVAEDAPQSNPTPAETPVMGEGLRLAYEAPEKSSETSEETVTAATADETSLEDLMAQMKSM.

ATP is bound by residues G83, D104, K127, N150, and N184. C226 and C229 together coordinate Zn(2+). Catalysis depends on C250, which acts as the Glycyl thioester intermediate. Residues C303 and C308 each coordinate Zn(2+). Residues 372 to 393 (APEKSSETSEETVTAATADETS) form a disordered region. Positions 382–391 (ETVTAATADE) are enriched in low complexity.

The protein belongs to the ubiquitin-activating E1 family. UBA5 subfamily.

In terms of biological role, E1-like enzyme which activates UFM1. The chain is Ubiquitin-like modifier-activating enzyme 5 from Drosophila simulans (Fruit fly).